The sequence spans 115 residues: Movement protein TGB2 (115 aa).

Residues 1–13 (MSAQGHRLTAPVN) are Cytoplasmic-facing. The chain crosses the membrane as a helical span at residues 14–34 (SEKVYIVLGLSFALISITFLL). At 35-74 (SRNNLPHVGDNIHSLPHGDAYRDGTKAILYNSPNFGSRTS) the chain is on the lumenal side. Residues 75–95 (LNNSKNAAFAAVLLLSLLIYG) traverse the membrane as a helical segment. Over 96-115 (SRCLSQRNHLCACGNNHSSN) the chain is Cytoplasmic.

This sequence belongs to the Tymovirales TGBp2 protein family.

The protein resides in the host endoplasmic reticulum membrane. Its function is as follows. Plays a role in viral cell-to-cell propagation, by facilitating genome transport to neighboring plant cells through plasmosdesmata,. This chain is Movement protein TGB2, found in Potato virus X (strain HB) (PVX).